A 281-amino-acid polypeptide reads, in one-letter code: Carbonic anhydrase (281 aa).

Cys106, His161, and Cys164 together coordinate Zn(2+).

Belongs to the beta-class carbonic anhydrase family. It depends on Zn(2+) as a cofactor.

The protein resides in the cytoplasm. Its subcellular location is the nucleus. It is found in the mitochondrion intermembrane space. The catalysed reaction is hydrogencarbonate + H(+) = CO2 + H2O. With respect to regulation, amines and amino acids act as activators of catalytic activity, whereas natural product-based phenols, dithiocarbamates, aliphatic and aromatic carboxylates, boronic acids, and sulfonamides act as inhibitors of enzymatic activity. Also inhibited by anions such as cyanide and carbonate, and to a lesser extent by sulfate, phenylboronic, and phenyl arsonic acid. Catalyzes the reversible hydration of CO(2) to H(2)CO(3). The main role may be to provide inorganic carbon for the bicarbonate-dependent carboxylation reactions catalyzed by pyruvate carboxylase, acetyl-CoA carboxylase and carbamoyl-phosphate synthetase. Involved in protection against oxidative damage. Acts as a CO(2) chemosensor and induces CO(2)-mediated filamentation. Essential for pathological growth in niches where sufficient CO(2) is not supplied by the host. Necessary for white-to-opaque switching at low CO(2) concentrations. This chain is Carbonic anhydrase (NCE103), found in Candida albicans (strain SC5314 / ATCC MYA-2876) (Yeast).